Here is a 3546-residue protein sequence, read N- to C-terminus: Ubiquitin carboxyl-terminal hydrolase 34 (3546 aa).

Phosphoserine is present on residues Ser352, Ser486, Ser487, and Ser490. 3 disordered regions span residues 502-535 (KEEEELRRTAPSPWSPAASPQSSDNSDTHQSGGS), 550-679 (VQQR…VFNT), and 1459-1478 (TGSYSDLYPDSDDSSEDQVE). Over residues 511–524 (APSPWSPAASPQSS) the composition is skewed to low complexity. 2 stretches are compositionally biased toward polar residues: residues 525–534 (DNSDTHQSGG) and 560–570 (SMQGSSDETAN). Low complexity predominate over residues 571–590 (SGEDGSSGPGSSSGHSDGSS). Over residues 591 to 609 (NEVNSSHASQSAGSPGSEV) the composition is skewed to polar residues. The span at 610-627 (QSEDIADIEALKEEDEDD) shows a compositional bias: acidic residues. Phosphoserine is present on Ser649. The span at 659–671 (QGMSERNGTSSGT) shows a compositional bias: polar residues. Residues 1467–1477 (PDSDDSSEDQV) are compositionally biased toward acidic residues. Ser1469 is subject to Phosphoserine. Residues 1894–2239 (VGLTNLGATC…SAYMLFYKRM (346 aa)) enclose the USP domain. Catalysis depends on Cys1903, which acts as the Nucleophile. The active-site Proton acceptor is His2164. Ser2488 bears the Phosphoserine mark. The disordered stretch occupies residues 3331-3443 (NSLQEQEAKE…HAEEQSNNGR (113 aa)). Positions 3336 to 3347 (QEAKERKTKDDE) are enriched in basic and acidic residues. Phosphoserine occurs at positions 3358 and 3359. Thr3381 carries the phosphothreonine modification. A phosphoserine mark is found at Ser3386 and Ser3406. A compositionally biased stretch (polar residues) spans 3421-3432 (SSFSEDMSNIRS). Residues 3433 to 3443 (QHAEEQSNNGR) show a composition bias toward basic and acidic residues. Ser3503 carries the post-translational modification Phosphoserine.

This sequence belongs to the peptidase C19 family. Interacts with AXIN1 and AXIN2. In terms of tissue distribution, expressed in brain at low level.

The enzyme catalyses Thiol-dependent hydrolysis of ester, thioester, amide, peptide and isopeptide bonds formed by the C-terminal Gly of ubiquitin (a 76-residue protein attached to proteins as an intracellular targeting signal).. Its function is as follows. Ubiquitin hydrolase that can remove conjugated ubiquitin from AXIN1 and AXIN2, thereby acting as a regulator of Wnt signaling pathway. Acts as an activator of the Wnt signaling pathway downstream of the beta-catenin destruction complex by deubiquitinating and stabilizing AXIN1 and AXIN2, leading to promote nuclear accumulation of AXIN1 and AXIN2 and positively regulate beta-catenin (CTNBB1)-mediated transcription. Recognizes and hydrolyzes the peptide bond at the C-terminal Gly of ubiquitin. Involved in the processing of poly-ubiquitin precursors as well as that of ubiquitinated proteins. The protein is Ubiquitin carboxyl-terminal hydrolase 34 (USP34) of Homo sapiens (Human).